The sequence spans 350 residues: UDP-N-acetylenolpyruvoylglucosamine reductase (350 aa).

Residues 24–195 (HVEATARWLL…VAVEFNLPLL (172 aa)) form the FAD-binding PCMH-type domain. Arg-172 is a catalytic residue. The Proton donor role is filled by Ser-245. Residue Glu-342 is part of the active site.

This sequence belongs to the MurB family. FAD is required as a cofactor.

Its subcellular location is the cytoplasm. It catalyses the reaction UDP-N-acetyl-alpha-D-muramate + NADP(+) = UDP-N-acetyl-3-O-(1-carboxyvinyl)-alpha-D-glucosamine + NADPH + H(+). Its pathway is cell wall biogenesis; peptidoglycan biosynthesis. Cell wall formation. The protein is UDP-N-acetylenolpyruvoylglucosamine reductase of Xanthomonas oryzae pv. oryzae (strain MAFF 311018).